The sequence spans 717 residues: Choline transporter-like protein 5 (717 aa).

A disordered region spans residues 1 to 24; that stretch reads MNDTEKPADTASEEEDFGDPRTYD. The Cytoplasmic segment spans residues 1–38; sequence MNDTEKPADTASEEEDFGDPRTYDPDFKGPVSNRSCTD. Residues 39-59 form a helical membrane-spanning segment; sequence VLCCMIFLLCIVGYIVLGLVA. Residues 60-242 are Extracellular-facing; sequence WVHGDPRRAA…KVFEDYATTW (183 aa). N-linked (GlcNAc...) asparagine glycosylation is found at asparagine 88 and asparagine 190. A helical membrane pass occupies residues 243 to 263; it reads YWILIGLMIAMVLSWIFLILL. Over 264 to 265 the chain is Cytoplasmic; that stretch reads RF. The chain crosses the membrane as a helical span at residues 266 to 286; it reads IAGCLFWVFMIGVIGIIGYGI. The Extracellular portion of the chain corresponds to 287 to 325; sequence WHCYQQYTNLQEHPRSVLTVYDIGIQTNISMYFELQQTW. N-linked (GlcNAc...) asparagine glycosylation occurs at asparagine 314. The chain crosses the membrane as a helical span at residues 326–346; it reads FTLMIILCIIEVIVILMLIFL. Topologically, residues 347-351 are cytoplasmic; sequence RNRIR. The helical transmembrane segment at 352–372 threads the bilayer; the sequence is VAIILLKEGSKAIGYVPSTLV. The Extracellular portion of the chain corresponds to 373–374; sequence YP. Residues 375–395 form a helical membrane-spanning segment; sequence ALTFILLSICICYWVVTAVFL. Over 396-460 the chain is Cytoplasmic; the sequence is ATSGVPVYKV…QYIPTFHVYN (65 aa). The helical transmembrane segment at 461–481 threads the bilayer; it reads LFVFLWLINFVIALGQCALAG. Residues 482-515 lie on the Extracellular side of the membrane; the sequence is AFATYYWAMKKPDDIPRYPLFTAFGRAIRYHTGS. Residues 516–536 traverse the membrane as a helical segment; it reads LAFGSLIIALIQMFKIVLEYL. Topologically, residues 537-610 are cytoplasmic; that stretch reads NHRLKRTENT…KVAVTDEVTY (74 aa). The chain crosses the membrane as a helical span at residues 611–631; the sequence is FVLFLGKILVAGSIGVLAFLF. Over 632 to 649 the chain is Extracellular; the sequence is FTQRLPVIAQGPASLNYY. Residues 650–670 traverse the membrane as a helical segment; sequence WVPLLTVILGSYLIAHGFFSV. At 671 to 717 the chain is on the cytoplasmic side; that stretch reads YAMCVETIFICFLEDLERNDGSTARPYYVSQPLLKIFQEENLQTKQQ.

Belongs to the CTL (choline transporter-like) family.

It is found in the cell membrane. The enzyme catalyses choline(out) + n H(+)(in) = choline(in) + n H(+)(out). Choline/H+ antiporter. The protein is Choline transporter-like protein 5 (SLC44A5) of Macaca fascicularis (Crab-eating macaque).